The following is a 63-amino-acid chain: MSDVTVVSCPTCGKPVVWGEVSPFRPFCSKRCQLIDLGEWAAEEKRIASSGDLSDSDDWSEER.

Zn(2+)-binding residues include cysteine 9, cysteine 12, cysteine 28, and cysteine 32.

It belongs to the DNA gyrase inhibitor YacG family. As to quaternary structure, interacts with GyrB. It depends on Zn(2+) as a cofactor.

Functionally, inhibits all the catalytic activities of DNA gyrase by preventing its interaction with DNA. Acts by binding directly to the C-terminal domain of GyrB, which probably disrupts DNA binding by the gyrase. The polypeptide is DNA gyrase inhibitor YacG (Salmonella arizonae (strain ATCC BAA-731 / CDC346-86 / RSK2980)).